Consider the following 275-residue polypeptide: uncharacterized protein (275 aa).

3 consecutive transmembrane segments (helical) span residues 15–35, 39–59, and 70–90; these read LFLP…FLGS, AIMI…FGLF, and ILYL…VVYL. The segment at 140–191 is disordered; that stretch reads SSKTDMDSQVAEAPQTEEGEPSVNQVPQEAGASHRVGPYQDQGLATDRNGNP.

The protein resides in the mitochondrion membrane. This is an uncharacterized protein from Arabidopsis thaliana (Mouse-ear cress).